A 229-amino-acid polypeptide reads, in one-letter code: Biosynthetic peptidoglycan transglycosylase (229 aa).

Residues 11 to 31 (NLLLALFLVLVAGPVVAVILY) traverse the membrane as a helical segment.

The protein belongs to the glycosyltransferase 51 family.

The protein localises to the cell inner membrane. The enzyme catalyses [GlcNAc-(1-&gt;4)-Mur2Ac(oyl-L-Ala-gamma-D-Glu-L-Lys-D-Ala-D-Ala)](n)-di-trans,octa-cis-undecaprenyl diphosphate + beta-D-GlcNAc-(1-&gt;4)-Mur2Ac(oyl-L-Ala-gamma-D-Glu-L-Lys-D-Ala-D-Ala)-di-trans,octa-cis-undecaprenyl diphosphate = [GlcNAc-(1-&gt;4)-Mur2Ac(oyl-L-Ala-gamma-D-Glu-L-Lys-D-Ala-D-Ala)](n+1)-di-trans,octa-cis-undecaprenyl diphosphate + di-trans,octa-cis-undecaprenyl diphosphate + H(+). Its pathway is cell wall biogenesis; peptidoglycan biosynthesis. Functionally, peptidoglycan polymerase that catalyzes glycan chain elongation from lipid-linked precursors. This chain is Biosynthetic peptidoglycan transglycosylase, found in Caulobacter vibrioides (strain ATCC 19089 / CIP 103742 / CB 15) (Caulobacter crescentus).